A 439-amino-acid polypeptide reads, in one-letter code: Probable glycine dehydrogenase (decarboxylating) subunit 1 (439 aa).

This sequence belongs to the GcvP family. N-terminal subunit subfamily. The glycine cleavage system is composed of four proteins: P, T, L and H. In this organism, the P 'protein' is a heterodimer of two subunits.

The enzyme catalyses N(6)-[(R)-lipoyl]-L-lysyl-[glycine-cleavage complex H protein] + glycine + H(+) = N(6)-[(R)-S(8)-aminomethyldihydrolipoyl]-L-lysyl-[glycine-cleavage complex H protein] + CO2. The glycine cleavage system catalyzes the degradation of glycine. The P protein binds the alpha-amino group of glycine through its pyridoxal phosphate cofactor; CO(2) is released and the remaining methylamine moiety is then transferred to the lipoamide cofactor of the H protein. In Aquifex aeolicus (strain VF5), this protein is Probable glycine dehydrogenase (decarboxylating) subunit 1.